The following is a 286-amino-acid chain: Shikimate dehydrogenase (NADP(+)) (286 aa).

Residues 25 to 27 (SLS) and Thr72 each bind shikimate. Lys76 (proton acceptor) is an active-site residue. Position 88 (Glu88) interacts with NADP(+). The shikimate site is built by Asn97 and Asp113. Residues 138 to 142 (GSGGA), 162 to 167 (NRTIER), and Ile232 each bind NADP(+). Position 234 (Tyr234) interacts with shikimate. Residue Gly255 participates in NADP(+) binding.

Belongs to the shikimate dehydrogenase family. In terms of assembly, homodimer.

It carries out the reaction shikimate + NADP(+) = 3-dehydroshikimate + NADPH + H(+). It participates in metabolic intermediate biosynthesis; chorismate biosynthesis; chorismate from D-erythrose 4-phosphate and phosphoenolpyruvate: step 4/7. Its function is as follows. Involved in the biosynthesis of the chorismate, which leads to the biosynthesis of aromatic amino acids. Catalyzes the reversible NADPH linked reduction of 3-dehydroshikimate (DHSA) to yield shikimate (SA). The polypeptide is Shikimate dehydrogenase (NADP(+)) (Magnetococcus marinus (strain ATCC BAA-1437 / JCM 17883 / MC-1)).